The sequence spans 2169 residues: Voltage-dependent L-type calcium channel subunit alpha-1C (2169 aa).

Topologically, residues 1–153 (MVPLVQPTTP…RACISIVEWK (153 aa)) are cytoplasmic. The tract at residues 76–97 (GAALSWQAAIDAGRQAKLMGSA) is calmodulin-binding. The span at 98-108 (GNTTISTVSST) shows a compositional bias: polar residues. Residues 98-127 (GNTTISTVSSTQRKRQQYGKPKKQSGTTAT) are disordered. The span at 109-120 (QRKRQQYGKPKK) shows a compositional bias: basic residues. One copy of the I repeat lies at 140–437 (NPIRRACISI…LVLGVLSGEF (298 aa)). The helical transmembrane segment at 154–172 (PFEIIILLTIFANCVALAI) threads the bilayer. Residues 173–187 (YIPFPEDDSNATNSN) are Extracellular-facing. N-linked (GlcNAc...) asparagine glycosylation occurs at Asn-182. Residues 188–208 (LERVEYLFLIIFTVEAFLKVI) traverse the membrane as a helical segment. Residues 209 to 217 (AYGLLFHPN) lie on the Cytoplasmic side of the membrane. A helical transmembrane segment spans residues 218 to 238 (AYLRNGWNLLDFIIVVVGLFS). At 239–261 (AILEQATKADGANALGGKGAGFD) the chain is on the extracellular side. Residues 262–280 (VKALRAFRVLRPLRLVSGV) form a helical membrane-spanning segment. The Cytoplasmic portion of the chain corresponds to 281–297 (PSLQVVLNSIIKAMVPL). A helical transmembrane segment spans residues 298–319 (LHTALLVLFVIIIYAIIGLELF). Over 320-379 (MGKMHKTCYNQEGITDVPAEEDPSPCALESGHGRQCQNGTVCKPGWDGPKHGITNFDNFA) the chain is Extracellular. Cys-345 and Cys-361 form a disulfide bridge. Asn-357 is a glycosylation site (N-linked (GlcNAc...) asparagine). An intramembrane region (pore-forming) is located at residues 380 to 401 (FAMLTVFQCITMEGWTDVLYWM). Positions 390-393 (TMEG) match the Selectivity filter of repeat I motif. Glu-392 is a binding site for Ca(2+). Over 402 to 409 (QDAMGYEL) the chain is Extracellular. A helical membrane pass occupies residues 410 to 430 (PWVYFVSLVIFGSFFVLNLVL). The Cytoplasmic portion of the chain corresponds to 431-553 (GVLSGEFSKE…RKCRAAVKSN (123 aa)). The segment at 457–474 (QQLEEDLKGYLDWITQAE) is AID/alpha-interaction domain; mediates interaction with the beta subunit. A disordered region spans residues 478–510 (PENEDEGVDEEKPRNMSMPTSETESVNTENVAG). Residues 494–507 (SMPTSETESVNTEN) show a composition bias toward polar residues. The residue at position 498 (Ser-498) is a Phosphoserine. At Thr-505 the chain carries Phosphothreonine. An II repeat occupies 539-785 (NRFCRRKCRA…VFLAIAVDNL (247 aa)). A helical transmembrane segment spans residues 554–572 (VFYWLVIFLVFLNTLTIAS). Topologically, residues 573-583 (EHYNQPHWLTE) are extracellular. A helical membrane pass occupies residues 584–604 (VQDTANKALLALFTAEMLLKM). The Cytoplasmic segment spans residues 605-615 (YSLGLQAYFVS). The helical transmembrane segment at 616-635 (LFNRLDCFIVCGGILETILV) threads the bilayer. Residues 636-644 (ETKIMSPLG) lie on the Extracellular side of the membrane. A helical transmembrane segment spans residues 645 to 663 (ISVLRCVRLLRIFKITRYW). At 664–682 (NSLSNLVASLLNSVRSIAS) the chain is on the cytoplasmic side. A helical membrane pass occupies residues 683–702 (LLLLLFLFIIIFSLLGMQLF). Residues 703 to 722 (GGKFNFDEMRTRRSTFDNFP) lie on the Extracellular side of the membrane. The pore-forming intramembrane region spans 723–744 (QSLLTVFQILTGEDWNSVMYDG). Positions 733–736 (TGED) match the Selectivity filter of repeat II motif. Glu-735 provides a ligand contact to Ca(2+). Residues 745–754 (IMAYGGPSFP) are Extracellular-facing. Residues 755–774 (GMLVCIYFIILFICGNYILL) traverse the membrane as a helical segment. Over 775–929 (NVFLAIAVDN…LQCHRIVNDT (155 aa)) the chain is Cytoplasmic. The interval 793-890 (SAQKEEEEEK…EMPVGPRPRP (98 aa)) is disordered. Positions 812–835 (SPEKKQEVVEKPAVEETKEEKIEL) are enriched in basic and acidic residues. Residues Ser-837 and Ser-844 each carry the phosphoserine modification. The tract at residues 858 to 905 (NENEDKSPYPNPDAAGEEDEEEPEMPVGPRPRPLSELHLKEKAVPMPE) is interaction with STAC2. Over residues 872 to 881 (AGEEDEEEPE) the composition is skewed to acidic residues. The III repeat unit spans residues 916–1198 (NRFRLQCHRI…IFVGFVIVTF (283 aa)). The helical transmembrane segment at 930–948 (IFTNLILFFILLSSISLAA) threads the bilayer. Residues 949–960 (EDPVQHTSFRNH) lie on the Extracellular side of the membrane. A helical transmembrane segment spans residues 961–980 (ILFYFDIVFTTIFTIEIALK). The Cytoplasmic portion of the chain corresponds to 981–996 (MTAYGAFLHKGSFCRN). The helical transmembrane segment at 997 to 1015 (YFNILDLLVVSVSLISFGI) threads the bilayer. Over 1016–1022 (QSSAINV) the chain is Extracellular. Residues 1023–1041 (VKILRVLRVLRPLRAINRA) form a helical membrane-spanning segment. At 1042 to 1060 (KGLKHVVQCVFVAIRTIGN) the chain is on the cytoplasmic side. A helical transmembrane segment spans residues 1061–1080 (IVIVTTLLQFMFACIGVQLF). Residues 1081 to 1130 (KGKLYTCSDSSKQTEAECKGNYITYKDGEVDQPIIQPRSWENSKFDFDNV) are Extracellular-facing. An intrachain disulfide couples Cys-1087 to Cys-1098. The dihydropyridine binding stretch occupies residues 1118–1207 (RSWENSKFDF…FQEQGEQEYK (90 aa)). Residues 1131-1151 (LAAMMALFTVSTFEGWPELLY) constitute an intramembrane region (pore-forming). Residues 1142-1145 (TFEG) carry the Selectivity filter of repeat III motif. Ca(2+) is bound at residue Glu-1144. Topologically, residues 1152-1168 (RSIDSHTEDKGPIYNYR) are extracellular. The helical transmembrane segment at 1169–1190 (VEISIFFIIYIIIIAFFMMNIF) threads the bilayer. Residues 1191-1248 (VGFVIVTFQEQGEQEYKNCELDKNQRQCVEYALKARPLRRYIPKNQHQYKVWYVVNST) are Cytoplasmic-facing. The stretch at 1235 to 1508 (NQHQYKVWYV…LFVAVVMDNF (274 aa)) is one IV repeat. A helical transmembrane segment spans residues 1249–1270 (YFEYLMFVLILLNTICLAMQHY). The Extracellular portion of the chain corresponds to 1271–1278 (GQSCLFKI). The chain crosses the membrane as a helical span at residues 1279-1300 (AMNILNMLFTGLFTVEMILKLI). The Cytoplasmic portion of the chain corresponds to 1301–1310 (AFKPKHYFCD). Residues 1311–1330 (AWNTFDALIVVGSIVDIAIT) traverse the membrane as a helical segment. The Extracellular segment spans residues 1331 to 1353 (EVNPAEHTQCSPSMNAEENSRIS). A helical transmembrane segment spans residues 1354–1372 (ITFFRLFRVMRLVKLLSRG). At 1373 to 1390 (EGIRTLLWTFIKSFQALP) the chain is on the cytoplasmic side. A helical membrane pass occupies residues 1391 to 1411 (YVALLIVMLFFIYAVIGMQVF). Topologically, residues 1412–1433 (GKIALNDTTEINRNNNFQTFPQ) are extracellular. N-linked (GlcNAc...) asparagine glycosylation is present at Asn-1417. The pore-forming intramembrane region spans 1434 to 1452 (AVLLLFRCATGEAWQDIML). Positions 1443 to 1446 (TGEA) match the Selectivity filter of repeat IV motif. Residues 1453–1480 (ACMPGKKCAPESDPSNSTEGETPCGSSF) lie on the Extracellular side of the membrane. The segment at 1459 to 1527 (KCAPESDPSN…LGPHHLDEFK (69 aa)) is dihydropyridine binding. Cys-1460 and Cys-1476 are oxidised to a cystine. Asn-1468 is a glycosylation site (N-linked (GlcNAc...) asparagine). The interval 1473–1515 (ETPCGSSFAVFYFISFYMLCAFLIINLFVAVVMDNFDYLTRDW) is phenylalkylamine binding. A helical membrane pass occupies residues 1481–1505 (AVFYFISFYMLCAFLIINLFVAVVM). Over 1506 to 2169 (DNFDYLTRDW…ADSRVHVRSL (664 aa)) the chain is Cytoplasmic. Residues 1640–1667 (DEVTVGKFYATFLIQEYFRKFKKRKEQG) form an important for interaction with STAC1, STAC2 and STAC3 region. The interval 1646–1666 (KFYATFLIQEYFRKFKKRKEQ) is calmodulin-binding IQ region. Residues 1680 to 1699 (LQAGLRTLHDIGPEIRRAIS) are important for localization in at the junctional membrane. A phosphoserine mark is found at Ser-1699 and Ser-1720. 2 disordered regions span residues 1761–1793 (KAGNNQGDTESPSHEKLVDSTFTPSSYSSTGSN) and 1894–1920 (ENRQLTPPEEDKGDTRPSPKKGFLRSA). Residues 1780–1792 (STFTPSSYSSTGS) show a composition bias toward polar residues. Residues 1894-1910 (ENRQLTPPEEDKGDTRP) show a composition bias toward basic and acidic residues. Position 1927 is a phosphoserine (Ser-1927).

The protein belongs to the calcium channel alpha-1 subunit (TC 1.A.1.11) family. CACNA1C subfamily. In terms of assembly, component of a calcium channel complex consisting of a pore-forming alpha subunit (CACNA1C) and ancillary beta, gamma and delta subunits. The channel complex contains alpha, beta, gamma and delta subunits in a 1:1:1:1 ratio, i.e. it contains only one of each type of subunit. CACNA1C channel activity is modulated by ancillary subunits, such as CACNB1, CACNB2, CACNB3, CACNA2D1 and CACNA2D4. Interacts with CACNB1. Interacts with CACNB2. Identified in a complex with CACNA2D4 and CACNB3. Interacts with CACNB3. Interacts with CACNA2D1. Interacts with CACNA2D4. Interacts with the gamma subunits CACNG4, CACNG6, CACNG7 and CACNG8. Interacts with CALM1. Interacts (via the N-terminus and the C-terminal C and IQ motifs) with CABP1; this inhibits Ca(2+)-dependent channel inactivation. The binding via the C motif is calcium independent whereas the binding via IQ requires the presence of calcium and is mutually exclusive with calmodulin binding. The binding to the cytoplasmic N-terminal domain is calcium independent but is essential for the channel modulation. Interacts (via C-terminal CDB motif) with CABP5; in a calcium-dependent manner. Interacts with CIB1; the interaction increases upon cardiomyocytes hypertrophy. Interacts with STAC2 and STAC3; this inhibits channel inactivation. Phosphorylation by PKA at Ser-1927 activates the channel. Elevated levels of blood glucose lead to increased phosphorylation by PKA. As to expression, expressed in heart. Expressed in uterus.

The protein localises to the cell membrane. Its subcellular location is the sarcolemma. It localises to the perikaryon. It is found in the postsynaptic density membrane. The protein resides in the cell projection. The protein localises to the dendrite. Its subcellular location is the T-tubule. It catalyses the reaction Ca(2+)(in) = Ca(2+)(out). Inhibited by dihydropyridines (DHP), such as isradipine. Inhibited by nifedipine. Channel activity is regulated by Ca(2+) and calmodulin. Binding of STAC1, STAC2 or STAC3 to a region that overlaps with the calmodulin binding site inhibits channel inactivation by Ca(2+) and calmodulin. Binding of calmodulin or CABP1 at the same regulatory sites results in opposite effects on the channel function. Shear stress and pressure increases calcium channel activity. Pore-forming, alpha-1C subunit of the voltage-gated calcium channel that gives rise to L-type calcium currents. Mediates influx of calcium ions into the cytoplasm, and thereby triggers calcium release from the sarcoplasm. Plays an important role in excitation-contraction coupling in the heart. Required for normal heart development and normal regulation of heart rhythm. Required for normal contraction of smooth muscle cells in blood vessels and in the intestine. Essential for normal blood pressure regulation via its role in the contraction of arterial smooth muscle cells. Long-lasting (L-type) calcium channels belong to the 'high-voltage activated' (HVA) group. This is Voltage-dependent L-type calcium channel subunit alpha-1C (CACNA1C) from Cavia porcellus (Guinea pig).